The following is a 387-amino-acid chain: Zn(2)-C6 fungal-type trascription factor aoiH (387 aa).

The segment at residues cysteine 21–cysteine 48 is a DNA-binding region (zn(2)-C6 fungal-type). Polar residues predominate over residues valine 68–glutamine 87. Positions valine 68 to isoleucine 94 are disordered.

Its subcellular location is the nucleus. Functionally, transcription factor; part of the gene cluster that mediates the biosynthesis of a methylated derivative of known natural products orthosporin and diaporthin. Positively regultaes the expression of the non-reducing polyketide synthase aoiG and the O-methyltransferase aoiO. This Aspergillus oryzae (strain ATCC 42149 / RIB 40) (Yellow koji mold) protein is Zn(2)-C6 fungal-type trascription factor aoiH.